The sequence spans 177 residues: Macro domain-containing protein in non 5'region (177 aa).

In terms of domain architecture, Macro spans 1-177; that stretch reads MSTSVSPVVR…VEFEEVLAMR (177 aa).

The protein belongs to the MacroD-type family.

This is Macro domain-containing protein in non 5'region from Streptomyces griseus.